We begin with the raw amino-acid sequence, 419 residues long: Structure-specific endonuclease subunit slx4 (419 aa).

Belongs to the SLX4 family. As to quaternary structure, forms a heterodimer with slx1. In terms of processing, phosphorylated in response to DNA damage.

It is found in the nucleus. Its subcellular location is the nucleolus. In terms of biological role, regulatory subunit of the slx1-slx4 structure-specific endonuclease that resolves DNA secondary structures generated during DNA repair and recombination. Has endonuclease activity towards branched DNA substrates, introducing single-strand cuts in duplex DNA close to junctions with ss-DNA. Has a preference for stem-loop (SL) and splayed arm Y structures. Introduces a single-strand cut in duplex DNA on the 3' side of a double-strand/single-strand junction with respect to the single-strand moving 3' to 5' away from the junction. Plays a critical role in maintaining the integrity of the ribosomal DNA (rDNA) loci, where it has a role in re-starting stalled replication forks. The complex initiates homologous recombination (HR) events, used to maintain rDNA copy number, in the rDNA repeats that are processed by a mechanism that requires rad22, but not rhp51. Has Holliday junction resolvase activity in vitro. Slx4 is required for efficient processing of DNA substrates. This chain is Structure-specific endonuclease subunit slx4, found in Schizosaccharomyces pombe (strain 972 / ATCC 24843) (Fission yeast).